The sequence spans 184 residues: Ribosome-recycling factor (184 aa).

Belongs to the RRF family.

The protein resides in the cytoplasm. In terms of biological role, responsible for the release of ribosomes from messenger RNA at the termination of protein biosynthesis. May increase the efficiency of translation by recycling ribosomes from one round of translation to another. The chain is Ribosome-recycling factor from Bifidobacterium animalis subsp. lactis (strain AD011).